A 334-amino-acid chain; its full sequence is UDP-N-acetylenolpyruvoylglucosamine reductase (334 aa).

The region spanning 16–186 (INVFAKKIII…LSVGIKLPKT (171 aa)) is the FAD-binding PCMH-type domain. Arg162 is an active-site residue. The active-site Proton donor is Ser232. Glu329 is an active-site residue.

Belongs to the MurB family. FAD serves as cofactor.

The protein localises to the cytoplasm. It catalyses the reaction UDP-N-acetyl-alpha-D-muramate + NADP(+) = UDP-N-acetyl-3-O-(1-carboxyvinyl)-alpha-D-glucosamine + NADPH + H(+). It participates in cell wall biogenesis; peptidoglycan biosynthesis. Functionally, cell wall formation. This Buchnera aphidicola subsp. Baizongia pistaciae (strain Bp) protein is UDP-N-acetylenolpyruvoylglucosamine reductase.